The following is a 79-amino-acid chain: Protein S100-G (79 aa).

Residue Ser-2 is modified to N-acetylserine. EF-hand domains follow at residues 13-48 (IFEKYAAKEGDPNQLSKEELKLLLQTEFPSLLKGPS) and 45-79 (KGPSTLDELFEELDKNGDGEVSFEEFQVLVKKISQ). Ca(2+) is bound by residues Gln-26 and Glu-31. Position 42 is a phosphoserine (Ser-42). Residues Asp-58, Asn-60, Asp-62, Glu-64, and Glu-69 each contribute to the Ca(2+) site.

This sequence belongs to the S-100 family.

The chain is Protein S100-G (S100G) from Bos taurus (Bovine).